The following is a 405-amino-acid chain: S-adenosylmethionine synthase (405 aa).

Residue H22 coordinates ATP. Mg(2+) is bound at residue D24. Position 50 (E50) interacts with K(+). Positions 63 and 107 each coordinate L-methionine. A flexible loop region spans residues 107–117; the sequence is QSPDIAQGVNR. Residues 184-186, 250-251, D259, 265-266, A282, and K286 contribute to the ATP site; these read DGK, RF, and RK. D259 lines the L-methionine pocket. K290 is a binding site for L-methionine.

The protein belongs to the AdoMet synthase family. Homotetramer; dimer of dimers. Requires Mg(2+) as cofactor. K(+) serves as cofactor.

It localises to the cytoplasm. The catalysed reaction is L-methionine + ATP + H2O = S-adenosyl-L-methionine + phosphate + diphosphate. It participates in amino-acid biosynthesis; S-adenosyl-L-methionine biosynthesis; S-adenosyl-L-methionine from L-methionine: step 1/1. Catalyzes the formation of S-adenosylmethionine (AdoMet) from methionine and ATP. The overall synthetic reaction is composed of two sequential steps, AdoMet formation and the subsequent tripolyphosphate hydrolysis which occurs prior to release of AdoMet from the enzyme. The protein is S-adenosylmethionine synthase of Roseiflexus castenholzii (strain DSM 13941 / HLO8).